The following is a 977-amino-acid chain: Alanine--tRNA ligase (977 aa).

Residues 512–535 (SQVDSKLQSSTPAGTGSYDSKQVS) form a disordered region. Zn(2+)-binding residues include His-618, His-622, Cys-720, and His-724.

Belongs to the class-II aminoacyl-tRNA synthetase family. Zn(2+) serves as cofactor.

Its subcellular location is the cytoplasm. The catalysed reaction is tRNA(Ala) + L-alanine + ATP = L-alanyl-tRNA(Ala) + AMP + diphosphate. Its function is as follows. Catalyzes the attachment of alanine to tRNA(Ala) in a two-step reaction: alanine is first activated by ATP to form Ala-AMP and then transferred to the acceptor end of tRNA(Ala). Also edits incorrectly charged Ser-tRNA(Ala) and Gly-tRNA(Ala) via its editing domain. The protein is Alanine--tRNA ligase of Leptospira interrogans serogroup Icterohaemorrhagiae serovar copenhageni (strain Fiocruz L1-130).